The sequence spans 131 residues: Small ribosomal subunit protein uS8 (131 aa).

This sequence belongs to the universal ribosomal protein uS8 family. As to quaternary structure, part of the 30S ribosomal subunit. Contacts proteins S5 and S12.

One of the primary rRNA binding proteins, it binds directly to 16S rRNA central domain where it helps coordinate assembly of the platform of the 30S subunit. The sequence is that of Small ribosomal subunit protein uS8 from Alkalilimnicola ehrlichii (strain ATCC BAA-1101 / DSM 17681 / MLHE-1).